The primary structure comprises 451 residues: Tryptophan--tRNA ligase (451 aa).

ATP-binding positions include 10 to 12 (TTT) and 18 to 19 (GN). Positions 11–19 (TTGTPHLGN) match the 'HIGH' region motif. Aspartate 143 is an L-tryptophan binding site. ATP-binding positions include 155–157 (GRD), leucine 195, and 202–206 (KMSKS). A 'KMSKS' region motif is present at residues 202-206 (KMSKS).

It belongs to the class-I aminoacyl-tRNA synthetase family. Homodimer.

The protein resides in the cytoplasm. The catalysed reaction is tRNA(Trp) + L-tryptophan + ATP = L-tryptophyl-tRNA(Trp) + AMP + diphosphate + H(+). Its function is as follows. Catalyzes the attachment of tryptophan to tRNA(Trp). This is Tryptophan--tRNA ligase from Bordetella pertussis (strain Tohama I / ATCC BAA-589 / NCTC 13251).